The sequence spans 443 residues: Glutamate-1-semialdehyde 2,1-aminomutase (443 aa).

N6-(pyridoxal phosphate)lysine is present on Lys-277.

It belongs to the class-III pyridoxal-phosphate-dependent aminotransferase family. HemL subfamily. As to quaternary structure, homodimer. Pyridoxal 5'-phosphate is required as a cofactor.

It is found in the cytoplasm. The enzyme catalyses (S)-4-amino-5-oxopentanoate = 5-aminolevulinate. It functions in the pathway porphyrin-containing compound metabolism; protoporphyrin-IX biosynthesis; 5-aminolevulinate from L-glutamyl-tRNA(Glu): step 2/2. This is Glutamate-1-semialdehyde 2,1-aminomutase from Pseudarthrobacter chlorophenolicus (strain ATCC 700700 / DSM 12829 / CIP 107037 / JCM 12360 / KCTC 9906 / NCIMB 13794 / A6) (Arthrobacter chlorophenolicus).